We begin with the raw amino-acid sequence, 310 residues long: Putative HTH-type transcriptional regulatory protein SSO0942 (310 aa).

Residues 125-180 form the HTH cro/C1-type domain; it reads LKHKREEMGYSIGDVAKFLGVSRKAIYDYEKGDSDVSLEVAEKLIDLFGDDIIGDV. Residues 136–155 constitute a DNA-binding region (H-T-H motif); the sequence is IGDVAKFLGVSRKAIYDYEK.

In Saccharolobus solfataricus (strain ATCC 35092 / DSM 1617 / JCM 11322 / P2) (Sulfolobus solfataricus), this protein is Putative HTH-type transcriptional regulatory protein SSO0942.